Reading from the N-terminus, the 332-residue chain is Adenosine deaminase (332 aa).

Residues His12 and His14 each coordinate Zn(2+). Substrate is bound by residues His14, Asp16, and Gly170. Zn(2+) is bound at residue His197. Catalysis depends on Glu200, which acts as the Proton donor. Position 278 (Asp278) interacts with Zn(2+).

It belongs to the metallo-dependent hydrolases superfamily. Adenosine and AMP deaminases family. Adenosine deaminase subfamily. The cofactor is Zn(2+).

The enzyme catalyses adenosine + H2O + H(+) = inosine + NH4(+). It catalyses the reaction 2'-deoxyadenosine + H2O + H(+) = 2'-deoxyinosine + NH4(+). Catalyzes the hydrolytic deamination of adenosine and 2-deoxyadenosine. This chain is Adenosine deaminase, found in Clostridium perfringens (strain 13 / Type A).